Consider the following 308-residue polypeptide: Ribose 1,5-bisphosphate isomerase (308 aa).

Residues 24-27 (RGAG) and Arg-67 each bind substrate. Catalysis depends on Cys-129, which acts as the Proton acceptor. The active-site Proton donor is Asp-198. Substrate contacts are provided by residues 208 to 209 (NK) and Lys-234.

This sequence belongs to the eIF-2B alpha/beta/delta subunits family. R15P isomerase subfamily.

The enzyme catalyses alpha-D-ribose 1,5-bisphosphate = D-ribulose 1,5-bisphosphate. In terms of biological role, catalyzes the isomerization of ribose 1,5-bisphosphate (R15P) to ribulose 1,5-bisphosphate (RuBP), the CO(2) acceptor and substrate for RubisCO. Functions in an archaeal AMP degradation pathway, together with AMP phosphorylase and RubisCO. The protein is Ribose 1,5-bisphosphate isomerase of Methanocaldococcus jannaschii (strain ATCC 43067 / DSM 2661 / JAL-1 / JCM 10045 / NBRC 100440) (Methanococcus jannaschii).